The chain runs to 1097 residues: DNA-directed RNA polymerase subunit beta (1097 aa).

A disordered region spans residues 1072 to 1097 (QDVNPRRSTPSRPTYESLGVADYDED).

This sequence belongs to the RNA polymerase beta chain family. In terms of assembly, in cyanobacteria the RNAP catalytic core is composed of 2 alpha, 1 beta, 1 beta', 1 gamma and 1 omega subunit. When a sigma factor is associated with the core the holoenzyme is formed, which can initiate transcription.

It carries out the reaction RNA(n) + a ribonucleoside 5'-triphosphate = RNA(n+1) + diphosphate. Functionally, DNA-dependent RNA polymerase catalyzes the transcription of DNA into RNA using the four ribonucleoside triphosphates as substrates. The protein is DNA-directed RNA polymerase subunit beta of Synechococcus sp. (strain CC9902).